The sequence spans 179 residues: Transthyretin-like protein 46 (179 aa).

Positions 1–17 (MNKLFVLLIALLGLTAA) are cleaved as a signal peptide. The disordered stretch occupies residues 144 to 179 (RRGGFNADYMDPDNSEKDQSKSSEESEDKEKTVETF). Basic and acidic residues predominate over residues 157-179 (NSEKDQSKSSEESEDKEKTVETF).

The protein belongs to the nematode transthyretin-like family.

Its subcellular location is the secreted. This chain is Transthyretin-like protein 46 (ttr-46), found in Caenorhabditis elegans.